We begin with the raw amino-acid sequence, 377 residues long: tRNA/tmRNA (uracil-C(5))-methyltransferase (377 aa).

Gln-199, Tyr-227, Asn-232, Glu-248, and Asp-308 together coordinate S-adenosyl-L-methionine. Cys-333 acts as the Nucleophile in catalysis. The Proton acceptor role is filled by Glu-367.

Belongs to the class I-like SAM-binding methyltransferase superfamily. RNA M5U methyltransferase family. TrmA subfamily.

It catalyses the reaction uridine(54) in tRNA + S-adenosyl-L-methionine = 5-methyluridine(54) in tRNA + S-adenosyl-L-homocysteine + H(+). It carries out the reaction uridine(341) in tmRNA + S-adenosyl-L-methionine = 5-methyluridine(341) in tmRNA + S-adenosyl-L-homocysteine + H(+). In terms of biological role, dual-specificity methyltransferase that catalyzes the formation of 5-methyluridine at position 54 (m5U54) in all tRNAs, and that of position 341 (m5U341) in tmRNA (transfer-mRNA). This chain is tRNA/tmRNA (uracil-C(5))-methyltransferase, found in Aeromonas hydrophila subsp. hydrophila (strain ATCC 7966 / DSM 30187 / BCRC 13018 / CCUG 14551 / JCM 1027 / KCTC 2358 / NCIMB 9240 / NCTC 8049).